We begin with the raw amino-acid sequence, 92 residues long: MTRSVWKGPFVDGYLLKKAEAAQSSGRKDVIKTWSRRSTIMPQFVGLTFGVHNGHKHVPVLISEDMVGMKLGEFAPTRFFPGHAADKKAKRK.

The protein belongs to the universal ribosomal protein uS19 family.

Functionally, protein S19 forms a complex with S13 that binds strongly to the 16S ribosomal RNA. In Phenylobacterium zucineum (strain HLK1), this protein is Small ribosomal subunit protein uS19.